A 359-amino-acid polypeptide reads, in one-letter code: N-acetyl-gamma-glutamyl-phosphate reductase (359 aa).

Cys162 is an active-site residue.

This sequence belongs to the NAGSA dehydrogenase family. Type 1 subfamily.

The protein resides in the cytoplasm. The enzyme catalyses N-acetyl-L-glutamate 5-semialdehyde + phosphate + NADP(+) = N-acetyl-L-glutamyl 5-phosphate + NADPH + H(+). It participates in amino-acid biosynthesis; L-arginine biosynthesis; N(2)-acetyl-L-ornithine from L-glutamate: step 3/4. Functionally, catalyzes the NADPH-dependent reduction of N-acetyl-5-glutamyl phosphate to yield N-acetyl-L-glutamate 5-semialdehyde. This is N-acetyl-gamma-glutamyl-phosphate reductase from Prochlorococcus marinus (strain NATL2A).